Consider the following 490-residue polypeptide: ATP synthase subunit beta (490 aa).

An ATP-binding site is contributed by 173-180 (GGAGVGKT).

Belongs to the ATPase alpha/beta chains family. As to quaternary structure, F-type ATPases have 2 components, CF(1) - the catalytic core - and CF(0) - the membrane proton channel. CF(1) has five subunits: alpha(3), beta(3), gamma(1), delta(1), epsilon(1). CF(0) has three main subunits: a(1), b(2) and c(9-12). The alpha and beta chains form an alternating ring which encloses part of the gamma chain. CF(1) is attached to CF(0) by a central stalk formed by the gamma and epsilon chains, while a peripheral stalk is formed by the delta and b chains.

It is found in the cell membrane. It catalyses the reaction ATP + H2O + 4 H(+)(in) = ADP + phosphate + 5 H(+)(out). Functionally, produces ATP from ADP in the presence of a proton gradient across the membrane. The catalytic sites are hosted primarily by the beta subunits. This is ATP synthase subunit beta from Bifidobacterium longum (strain DJO10A).